Here is a 132-residue protein sequence, read N- to C-terminus: Fatty acid-binding protein 1 (132 aa).

Ala-2 is subject to N-acetylalanine.

The protein belongs to the calycin superfamily. Fatty-acid binding protein (FABP) family.

In Fasciola gigantica (Giant liver fluke), this protein is Fatty acid-binding protein 1 (FABP-1).